Reading from the N-terminus, the 780-residue chain is Acyl-CoA dehydrogenase family member 11 (780 aa).

An N6-acetyllysine modification is found at Lys177. Tyr324 carries the post-translational modification Phosphotyrosine. N6-succinyllysine is present on Lys391. Residues 504–514 (FCMTEPDVASS) and 538–540 (WSS) each bind FAD. Position 514 (Ser514) interacts with substrate. Residue 629–632 (GPGR) participates in substrate binding. FAD contacts are provided by residues Arg657, Gln727, and 727 to 731 (QVCGG). Gly755 provides a ligand contact to substrate. Residue 756-758 (PDE) coordinates FAD.

Belongs to the acyl-CoA dehydrogenase family. As to quaternary structure, homodimer. Requires FAD as cofactor. Widely expressed with highest levels in brain followed by liver, heart and kidney.

It is found in the peroxisome. The protein localises to the mitochondrion membrane. It catalyses the reaction a 2,3-saturated acyl-CoA + oxidized [electron-transfer flavoprotein] + H(+) = a (2E)-enoyl-CoA + reduced [electron-transfer flavoprotein]. It carries out the reaction docosanoyl-CoA + oxidized [electron-transfer flavoprotein] + H(+) = (2E)-docosenoyl-CoA + reduced [electron-transfer flavoprotein]. The enzyme catalyses tetracosanoyl-CoA + oxidized [electron-transfer flavoprotein] + H(+) = (2E)-tetracosenoyl-CoA + reduced [electron-transfer flavoprotein]. The catalysed reaction is eicosanoyl-CoA + oxidized [electron-transfer flavoprotein] + H(+) = (2E)-eicosenoyl-CoA + reduced [electron-transfer flavoprotein]. It catalyses the reaction hexacosanoyl-CoA + oxidized [electron-transfer flavoprotein] + H(+) = (2E)-hexacosenoyl-CoA + reduced [electron-transfer flavoprotein]. It carries out the reaction tricosanoyl-CoA + oxidized [electron-transfer flavoprotein] + H(+) = (2E)-tricosenoyl-CoA + reduced [electron-transfer flavoprotein]. It participates in lipid metabolism; fatty acid beta-oxidation. Acyl-CoA dehydrogenase, that exhibits maximal activity towards saturated C22-CoA. Probably participates in beta-oxydation and energy production but could also play a role in the metabolism of specific fatty acids to control fatty acids composition of cellular lipids in brain. This Homo sapiens (Human) protein is Acyl-CoA dehydrogenase family member 11 (ACAD11).